Here is a 378-residue protein sequence, read N- to C-terminus: Ribosomal RNA large subunit methyltransferase G (378 aa).

This sequence belongs to the methyltransferase superfamily. RlmG family.

The protein localises to the cytoplasm. It catalyses the reaction guanosine(1835) in 23S rRNA + S-adenosyl-L-methionine = N(2)-methylguanosine(1835) in 23S rRNA + S-adenosyl-L-homocysteine + H(+). Specifically methylates the guanine in position 1835 (m2G1835) of 23S rRNA. In Salmonella newport (strain SL254), this protein is Ribosomal RNA large subunit methyltransferase G.